We begin with the raw amino-acid sequence, 81 residues long: Photosystem I iron-sulfur center (81 aa).

4Fe-4S ferredoxin-type domains are found at residues 2 to 31 and 39 to 68; these read AHTV…MVPW and MASA…IRVY. Positions 11, 14, 17, 21, 48, 51, 54, and 58 each coordinate [4Fe-4S] cluster.

As to quaternary structure, the eukaryotic PSI reaction center is composed of at least 11 subunits. [4Fe-4S] cluster serves as cofactor.

It localises to the plastid. The protein localises to the chloroplast thylakoid membrane. It catalyses the reaction reduced [plastocyanin] + hnu + oxidized [2Fe-2S]-[ferredoxin] = oxidized [plastocyanin] + reduced [2Fe-2S]-[ferredoxin]. Apoprotein for the two 4Fe-4S centers FA and FB of photosystem I (PSI); essential for photochemical activity. FB is the terminal electron acceptor of PSI, donating electrons to ferredoxin. The C-terminus interacts with PsaA/B/D and helps assemble the protein into the PSI complex. Required for binding of PsaD and PsaE to PSI. PSI is a plastocyanin/cytochrome c6-ferredoxin oxidoreductase, converting photonic excitation into a charge separation, which transfers an electron from the donor P700 chlorophyll pair to the spectroscopically characterized acceptors A0, A1, FX, FA and FB in turn. The sequence is that of Photosystem I iron-sulfur center from Cyanidioschyzon merolae (strain NIES-3377 / 10D) (Unicellular red alga).